Here is a 273-residue protein sequence, read N- to C-terminus: S-adenosylmethionine decarboxylase proenzyme (273 aa).

Ser-118 acts as the Schiff-base intermediate with substrate; via pyruvic acid in catalysis. A Pyruvic acid (Ser); by autocatalysis modification is found at Ser-118. His-123 (proton acceptor; for processing activity) is an active-site residue. The active-site Proton donor; for catalytic activity is Cys-146.

The protein belongs to the prokaryotic AdoMetDC family. Type 2 subfamily. As to quaternary structure, heterooctamer of four alpha and four beta chains arranged as a tetramer of alpha/beta heterodimers. Requires pyruvate as cofactor. In terms of processing, is synthesized initially as an inactive proenzyme. Formation of the active enzyme involves a self-maturation process in which the active site pyruvoyl group is generated from an internal serine residue via an autocatalytic post-translational modification. Two non-identical subunits are generated from the proenzyme in this reaction, and the pyruvate is formed at the N-terminus of the alpha chain, which is derived from the carboxyl end of the proenzyme. The post-translation cleavage follows an unusual pathway, termed non-hydrolytic serinolysis, in which the side chain hydroxyl group of the serine supplies its oxygen atom to form the C-terminus of the beta chain, while the remainder of the serine residue undergoes an oxidative deamination to produce ammonia and the pyruvoyl group blocking the N-terminus of the alpha chain.

It carries out the reaction S-adenosyl-L-methionine + H(+) = S-adenosyl 3-(methylsulfanyl)propylamine + CO2. It functions in the pathway amine and polyamine biosynthesis; S-adenosylmethioninamine biosynthesis; S-adenosylmethioninamine from S-adenosyl-L-methionine: step 1/1. Catalyzes the decarboxylation of S-adenosylmethionine to S-adenosylmethioninamine (dcAdoMet), the propylamine donor required for the synthesis of the polyamines spermine and spermidine from the diamine putrescine. The polypeptide is S-adenosylmethionine decarboxylase proenzyme (Alkalilimnicola ehrlichii (strain ATCC BAA-1101 / DSM 17681 / MLHE-1)).